The sequence spans 153 residues: Transcriptional repressor NrdR (153 aa).

A zinc finger spans residues 3–34 (CPFCAHDDSQVKDSRPAEDNAAIRRRRQCSKC). The 91-residue stretch at 49-139 (VTVVKSDDKR…VYRDFSEARD (91 aa)) folds into the ATP-cone domain.

It belongs to the NrdR family. Zn(2+) is required as a cofactor.

Functionally, negatively regulates transcription of bacterial ribonucleotide reductase nrd genes and operons by binding to NrdR-boxes. This Erythrobacter litoralis (strain HTCC2594) protein is Transcriptional repressor NrdR.